Reading from the N-terminus, the 334-residue chain is S-adenosylmethionine:tRNA ribosyltransferase-isomerase (334 aa).

The protein belongs to the QueA family. In terms of assembly, monomer.

It localises to the cytoplasm. The catalysed reaction is 7-aminomethyl-7-carbaguanosine(34) in tRNA + S-adenosyl-L-methionine = epoxyqueuosine(34) in tRNA + adenine + L-methionine + 2 H(+). The protein operates within tRNA modification; tRNA-queuosine biosynthesis. In terms of biological role, transfers and isomerizes the ribose moiety from AdoMet to the 7-aminomethyl group of 7-deazaguanine (preQ1-tRNA) to give epoxyqueuosine (oQ-tRNA). In Thermosipho melanesiensis (strain DSM 12029 / CIP 104789 / BI429), this protein is S-adenosylmethionine:tRNA ribosyltransferase-isomerase.